We begin with the raw amino-acid sequence, 481 residues long: Mediator of RNA polymerase II transcription subunit 3 (481 aa).

Residues Q79–Q107 adopt a coiled-coil conformation. 2 disordered regions span residues A140–P261 and N415–Y463. Residues T148–A203 are compositionally biased toward low complexity. Residues K204–K213 are compositionally biased toward basic residues. Residues K214–N248 show a composition bias toward low complexity. The span at I249 to G259 shows a compositional bias: polar residues. Over residues M428–N458 the composition is skewed to low complexity.

The protein belongs to the Mediator complex subunit 3 family. As to quaternary structure, component of the Mediator complex.

It localises to the nucleus. Component of the Mediator complex, a coactivator involved in regulated gene transcription of nearly all RNA polymerase II-dependent genes. Mediator functions as a bridge to convey information from gene-specific regulatory proteins to the basal RNA polymerase II transcription machinery. Mediator is recruited to promoters by direct interactions with regulatory proteins and serves as a scaffold for the assembly of a functional preinitiation complex with RNA polymerase II and the general transcription factors. The protein is Mediator of RNA polymerase II transcription subunit 3 (PGD1) of Candida glabrata (strain ATCC 2001 / BCRC 20586 / JCM 3761 / NBRC 0622 / NRRL Y-65 / CBS 138) (Yeast).